A 404-amino-acid polypeptide reads, in one-letter code: Zinc finger CCCH domain-containing protein 15 homolog (404 aa).

Over residues Met1–Pro10 the composition is skewed to pro residues. The disordered stretch occupies residues Met1–Leu71. Residues Lys12–Phe28 show a composition bias toward basic and acidic residues. Positions Gln38–Gln50 are enriched in low complexity. Residues Pro56–Leu71 show a composition bias toward basic and acidic residues. 2 consecutive C3H1-type zinc fingers follow at residues Asp94–Ser121 and Pro165–Pro202. Phosphothreonine is present on Thr218. Ser221 is subject to Phosphoserine. A coiled-coil region spans residues Leu246 to Asp270. Low complexity-rich tracts occupy residues Glu352–Asp361 and Pro369–Pro380. A disordered region spans residues Glu352–Pro380.

Belongs to the ZC3H15/TMA46 family.

In Drosophila melanogaster (Fruit fly), this protein is Zinc finger CCCH domain-containing protein 15 homolog.